The chain runs to 294 residues: MKKRIYAPATIANFGPGFDVFGMAIEEPGDEVIVKESDSFEIEVEGYDVPRDENNVAVISAKALFKMVGEEGGVKIRLKKGVRPKSGLGSSGASSVAGALAAARVLGVDNDELIIMAALEGEKAASGSPHGDNVIPSYYGGFNILESLNPLRVHRVDVELNVVVVLPEVEVPTKEARRIVPEKVPLKDAIKNLAMASSLVLALKEGDIETVGRLLDDNLALPYRKKLMPWFDEVRKAGLEAGAYGVTVSGSGPSLFAIGENLKDIGKAMKEKFEELGIRAEFWITKTGRGAKWY.

Residue 83 to 93 coordinates ATP; it reads RPKSGLGSSGA.

Belongs to the GHMP kinase family. Homoserine kinase subfamily.

It localises to the cytoplasm. The catalysed reaction is L-homoserine + ATP = O-phospho-L-homoserine + ADP + H(+). It functions in the pathway amino-acid biosynthesis; L-threonine biosynthesis; L-threonine from L-aspartate: step 4/5. Its function is as follows. Catalyzes the ATP-dependent phosphorylation of L-homoserine to L-homoserine phosphate. The protein is Homoserine kinase of Pyrococcus abyssi (strain GE5 / Orsay).